The primary structure comprises 224 residues: Ribonuclease T (224 aa).

Over residues 1-11 the composition is skewed to acidic residues; it reads MSEDLYEDDLD. The tract at residues 1–22 is disordered; sequence MSEDLYEDDLDTQGSSGPRHPM. One can recognise an Exonuclease domain in the interval 32 to 206; sequence VVVDVETGGF…YDTEKTAELF (175 aa). Positions 35, 37, 193, and 198 each coordinate Mg(2+). Histidine 193 serves as the catalytic Proton donor/acceptor.

Belongs to the RNase T family. In terms of assembly, homodimer. Mg(2+) is required as a cofactor.

In terms of biological role, trims short 3' overhangs of a variety of RNA species, leaving a one or two nucleotide 3' overhang. Responsible for the end-turnover of tRNA: specifically removes the terminal AMP residue from uncharged tRNA (tRNA-C-C-A). Also appears to be involved in tRNA biosynthesis. This is Ribonuclease T from Pseudomonas putida (strain ATCC 700007 / DSM 6899 / JCM 31910 / BCRC 17059 / LMG 24140 / F1).